The following is a 103-amino-acid chain: Large ribosomal subunit protein bL21 (103 aa).

Belongs to the bacterial ribosomal protein bL21 family. In terms of assembly, part of the 50S ribosomal subunit. Contacts protein L20.

Functionally, this protein binds to 23S rRNA in the presence of protein L20. In Cupriavidus pinatubonensis (strain JMP 134 / LMG 1197) (Cupriavidus necator (strain JMP 134)), this protein is Large ribosomal subunit protein bL21.